The following is a 331-amino-acid chain: 6-phosphogluconolactonase (331 aa).

It belongs to the cycloisomerase 2 family.

It catalyses the reaction 6-phospho-D-glucono-1,5-lactone + H2O = 6-phospho-D-gluconate + H(+). The protein operates within carbohydrate degradation; pentose phosphate pathway; D-ribulose 5-phosphate from D-glucose 6-phosphate (oxidative stage): step 2/3. Catalyzes the hydrolysis of 6-phosphogluconolactone to 6-phosphogluconate. The chain is 6-phosphogluconolactonase from Salmonella paratyphi A (strain ATCC 9150 / SARB42).